A 130-amino-acid polypeptide reads, in one-letter code: Small ribosomal subunit protein uS11 (130 aa).

This sequence belongs to the universal ribosomal protein uS11 family. As to quaternary structure, part of the 30S ribosomal subunit. Interacts with proteins S7 and S18. Binds to IF-3.

Its function is as follows. Located on the platform of the 30S subunit, it bridges several disparate RNA helices of the 16S rRNA. Forms part of the Shine-Dalgarno cleft in the 70S ribosome. The sequence is that of Small ribosomal subunit protein uS11 from Synechococcus sp. (strain CC9605).